Reading from the N-terminus, the 135-residue chain is Adult cuticle protein 1 (135 aa).

Residues Met-1 to Ser-19 form the signal peptide. A run of 3 repeats spans residues Ala-72–Ala-75, Ala-78–Ala-81, and Ala-128–Ala-131.

In terms of tissue distribution, detected in the epidermis underlying the head and thorax (including legs and wings), but not in the abdominal epidermis of newly eclosed flies.

Functionally, component of the cuticle of the adult fruit fly. Could be involved in thickening of the hard adult cuticle. The sequence is that of Adult cuticle protein 1 (Acp1) from Drosophila melanogaster (Fruit fly).